The sequence spans 217 residues: Small ribosomal subunit protein uS3 (217 aa).

Positions 38 to 106 (IRQLIQTKLA…QVHINIVEIK (69 aa)) constitute a KH type-2 domain.

The protein belongs to the universal ribosomal protein uS3 family. In terms of assembly, part of the 30S ribosomal subunit. Forms a tight complex with proteins S10 and S14.

Binds the lower part of the 30S subunit head. Binds mRNA in the 70S ribosome, positioning it for translation. The protein is Small ribosomal subunit protein uS3 of Lactococcus lactis subsp. lactis (strain IL1403) (Streptococcus lactis).